Reading from the N-terminus, the 89-residue chain is Small ribosomal subunit protein uS19 (89 aa).

This sequence belongs to the universal ribosomal protein uS19 family.

Its function is as follows. Protein S19 forms a complex with S13 that binds strongly to the 16S ribosomal RNA. The protein is Small ribosomal subunit protein uS19 of Brachyspira hyodysenteriae (strain ATCC 49526 / WA1).